We begin with the raw amino-acid sequence, 395 residues long: Chorismate synthase (395 aa).

Residues arginine 40 and arginine 46 each contribute to the NADP(+) site. Residues 134–136 (RAS), 256–257 (QA), glycine 301, 316–320 (KPIST), and arginine 342 each bind FMN.

It belongs to the chorismate synthase family. Homotetramer. It depends on FMNH2 as a cofactor.

It carries out the reaction 5-O-(1-carboxyvinyl)-3-phosphoshikimate = chorismate + phosphate. It participates in metabolic intermediate biosynthesis; chorismate biosynthesis; chorismate from D-erythrose 4-phosphate and phosphoenolpyruvate: step 7/7. In terms of biological role, catalyzes the anti-1,4-elimination of the C-3 phosphate and the C-6 proR hydrogen from 5-enolpyruvylshikimate-3-phosphate (EPSP) to yield chorismate, which is the branch point compound that serves as the starting substrate for the three terminal pathways of aromatic amino acid biosynthesis. This reaction introduces a second double bond into the aromatic ring system. The sequence is that of Chorismate synthase from Beutenbergia cavernae (strain ATCC BAA-8 / DSM 12333 / CCUG 43141 / JCM 11478 / NBRC 16432 / NCIMB 13614 / HKI 0122).